The primary structure comprises 372 residues: Tryptophan--tRNA ligase (372 aa).

A 'HIGH' region motif is present at residues 79-87 (PSGKFHFGH). The interval 247–268 (KLQPGLDGRKMSSSRPDSTIFL) is disordered. Residues 256–260 (KMSSS) carry the 'KMSKS' region motif. Residues 257–267 (MSSSRPDSTIF) are compositionally biased toward polar residues.

The protein belongs to the class-I aminoacyl-tRNA synthetase family.

The protein resides in the cytoplasm. It catalyses the reaction tRNA(Trp) + L-tryptophan + ATP = L-tryptophyl-tRNA(Trp) + AMP + diphosphate + H(+). This is Tryptophan--tRNA ligase from Aeropyrum pernix (strain ATCC 700893 / DSM 11879 / JCM 9820 / NBRC 100138 / K1).